Reading from the N-terminus, the 170-residue chain is Tubulin polymerization-promoting protein family member 2 (170 aa).

The span at 105 to 117 shows a compositional bias: low complexity; that stretch reads TTGVTKSTTVGGV. Positions 105–170 are disordered; the sequence is TTGVTKSTTV…GAGTYDKKNQ (66 aa). Residues 129–149 are compositionally biased toward basic and acidic residues; that stretch reads THKERFDESGKGKGIEGREET.

This sequence belongs to the TPPP family. As to expression, only expressed in male reproductive organs, including testis. Expressed in elongating spermatids at stages IV-VIII of the seminiferous epithelial cycle in testis and in mature sperm in the epididymis.

The protein localises to the cytoplasm. It is found in the cytosol. It localises to the cell projection. Its subcellular location is the cilium. The protein resides in the flagellum. Functionally, probable regulator of microtubule dynamics required for sperm motility. In contrast to other members of the family, has no microtubule bundling activity. The sequence is that of Tubulin polymerization-promoting protein family member 2 from Mus musculus (Mouse).